We begin with the raw amino-acid sequence, 123 residues long: Large ribosomal subunit protein uL18 (123 aa).

The protein belongs to the universal ribosomal protein uL18 family. Part of the 50S ribosomal subunit; part of the 5S rRNA/L5/L18/L25 subcomplex. Contacts the 5S and 23S rRNAs.

Its function is as follows. This is one of the proteins that bind and probably mediate the attachment of the 5S RNA into the large ribosomal subunit, where it forms part of the central protuberance. The polypeptide is Large ribosomal subunit protein uL18 (Protochlamydia amoebophila (strain UWE25)).